Consider the following 149-residue polypeptide: Transcriptional repressor NrdR (149 aa).

A zinc finger lies at 3–34; it reads CPYCSYEESKVVDSRSAEDYNAIRRRRECLRC. The 91-residue stretch at 49-139 folds into the ATP-cone domain; the sequence is ILVIKKDLSR…VYRQFKDINT (91 aa).

It belongs to the NrdR family. Zn(2+) is required as a cofactor.

Negatively regulates transcription of bacterial ribonucleotide reductase nrd genes and operons by binding to NrdR-boxes. This Clostridium perfringens (strain ATCC 13124 / DSM 756 / JCM 1290 / NCIMB 6125 / NCTC 8237 / Type A) protein is Transcriptional repressor NrdR.